We begin with the raw amino-acid sequence, 517 residues long: L-amino-acid oxidase (517 aa).

The signal sequence occupies residues 1–19; that stretch reads MNVFSIFSLVFLAAFGSCA. A disulfide bridge connects residues Cys29 and Cys192. Residues 62 to 63, 82 to 83, Arg90, and 106 to 109 contribute to the FAD site; these read MA, EA, and GPMR. Residue Arg109 participates in substrate binding. Asn191 carries N-linked (GlcNAc...) asparagine glycosylation. FAD is bound at residue Val280. A disulfide bond links Cys350 and Cys431. The N-linked (GlcNAc...) asparagine glycan is linked to Asn380. Substrate is bound at residue Tyr391. Residues Glu476 and 483 to 488 contribute to the FAD site; that span reads GWLDST. Position 483–484 (483–484) interacts with substrate; the sequence is GW.

Belongs to the flavin monoamine oxidase family. FIG1 subfamily. Monomer. This is in contrast with most of its orthologs, that are non-covalently linked homodimers. FAD is required as a cofactor. N-glycosylated. Expressed by the venom gland.

The protein resides in the secreted. It carries out the reaction an L-alpha-amino acid + O2 + H2O = a 2-oxocarboxylate + H2O2 + NH4(+). The enzyme catalyses L-leucine + O2 + H2O = 4-methyl-2-oxopentanoate + H2O2 + NH4(+). It catalyses the reaction L-phenylalanine + O2 + H2O = 3-phenylpyruvate + H2O2 + NH4(+). The catalysed reaction is L-tryptophan + O2 + H2O = indole-3-pyruvate + H2O2 + NH4(+). It carries out the reaction L-methionine + O2 + H2O = 4-methylsulfanyl-2-oxobutanoate + H2O2 + NH4(+). The enzyme catalyses L-isoleucine + O2 + H2O = (S)-3-methyl-2-oxopentanoate + H2O2 + NH4(+). It catalyses the reaction L-arginine + O2 + H2O = 5-guanidino-2-oxopentanoate + H2O2 + NH4(+). The catalysed reaction is L-aspartate + O2 + H2O = oxaloacetate + H2O2 + NH4(+). It carries out the reaction L-histidine + O2 + H2O = 3-(imidazol-5-yl)pyruvate + H2O2 + NH4(+). The enzyme catalyses L-asparagine + O2 + H2O = 2-oxosuccinamate + H2O2 + NH4(+). It catalyses the reaction L-tyrosine + O2 + H2O = 3-(4-hydroxyphenyl)pyruvate + H2O2 + NH4(+). The catalysed reaction is L-glutamine + O2 + H2O = 2-oxoglutaramate + H2O2 + NH4(+). It carries out the reaction L-alanine + O2 + H2O = pyruvate + H2O2 + NH4(+). The enzyme catalyses L-lysine + O2 + H2O = 6-amino-2-oxohexanoate + H2O2 + NH4(+). It catalyses the reaction L-glutamate + O2 + H2O = H2O2 + 2-oxoglutarate + NH4(+). Functionally, catalyzes an oxidative deamination of predominantly hydrophobic and aromatic L-amino acids, thus producing hydrogen peroxide that may contribute to the diverse toxic effects of this enzyme. Is highly active against L-Tyr, L-Asp, L-Phe, L-Glu, L-Trp, L-His, L-Gln, L-Ile, L-Met, L-Leu and moderately active against L-Lys, L-Arg, L-Ala and L-Asn. Exhibits diverse biological activities, such as edema, inflammatory cell infiltration, cytotoxicity and apoptosis, as well as induction of platelet aggregation. Effects of snake L-amino oxidases on platelets are controversial, since they either induce aggregation or inhibit agonist-induced aggregation. These different effects are probably due to different experimental conditions. This protein may also induce hemorrhage, hemolysis, and have antibacterial and antiparasitic activities. The sequence is that of L-amino-acid oxidase from Bungarus fasciatus (Banded krait).